A 268-amino-acid chain; its full sequence is MERYQQLFKQLAAKKEGAFVPFVQLGDPSPAMSLNIIDTLIAAGADALELGIPFSDPLADGPTIQNAALRAFAAGVTPAICFEILAEIRQKHPTIPIGLLMYANLVFHNGIDHFYQRCAEVGVDSVLIADVPFEESAPFRAAALRHGIAPIFICPPNADDDLLREIASHGRGYTYLLSRAGVTGAENHGQLPLNHLVDKLREYNAAPALQGFGISEPAQVKASLAAGAAGAISGSAIVKIIEKNVAQPVEMLVQLTRFVTEMKAATRS.

Catalysis depends on proton acceptor residues Glu49 and Asp60.

The protein belongs to the TrpA family. As to quaternary structure, tetramer of two alpha and two beta chains.

It catalyses the reaction (1S,2R)-1-C-(indol-3-yl)glycerol 3-phosphate + L-serine = D-glyceraldehyde 3-phosphate + L-tryptophan + H2O. It participates in amino-acid biosynthesis; L-tryptophan biosynthesis; L-tryptophan from chorismate: step 5/5. Its function is as follows. The alpha subunit is responsible for the aldol cleavage of indoleglycerol phosphate to indole and glyceraldehyde 3-phosphate. The protein is Tryptophan synthase alpha chain of Yersinia pseudotuberculosis serotype O:1b (strain IP 31758).